The primary structure comprises 185 residues: Ribosome-recycling factor (185 aa).

It belongs to the RRF family.

It is found in the cytoplasm. Its function is as follows. Responsible for the release of ribosomes from messenger RNA at the termination of protein biosynthesis. May increase the efficiency of translation by recycling ribosomes from one round of translation to another. The sequence is that of Ribosome-recycling factor from Nocardioides sp. (strain ATCC BAA-499 / JS614).